Consider the following 355-residue polypeptide: MRFSDNLAKILDKYENLGNKLSSGIMGDEFVKASKEYAELEDVVAKIKEYNKAKSELEEANNFKLEVGLDNATLEMIEDEIYTLENSLPKLERAVKIALLPKDDADSKSAIIEVRAGSGGEEAALFAAVLFNMYQRYAELKGWRFEILAISDTGIGGYKEASASIKGKDVFSKLKFESGVHRVQRVPETESQGRIHTSAATVAVLPEAEEVDIKIEDKDLRIDTYRASGAGGQHVNTTDSAVRITHIPTGITVALQDEKSQHKNKAKALKILRARIYEEERRKKEQERADSRRGQVGSGNRSERIRTYNFPQGRVSDHRINLTLYKIDEVVKNGQLDEFVEALIADDEAKKLLEI.

The residue at position 233 (Gln-233) is an N5-methylglutamine. Residues Glu-280–Arg-293 show a composition bias toward basic and acidic residues. The disordered stretch occupies residues Glu-280 to Arg-306.

It belongs to the prokaryotic/mitochondrial release factor family. Methylated by PrmC. Methylation increases the termination efficiency of RF1.

The protein localises to the cytoplasm. Peptide chain release factor 1 directs the termination of translation in response to the peptide chain termination codons UAG and UAA. The sequence is that of Peptide chain release factor 1 from Rickettsia africae (strain ESF-5).